Consider the following 130-residue polypeptide: Large ribosomal subunit protein bL19 (130 aa).

Belongs to the bacterial ribosomal protein bL19 family.

This protein is located at the 30S-50S ribosomal subunit interface and may play a role in the structure and function of the aminoacyl-tRNA binding site. The protein is Large ribosomal subunit protein bL19 of Mycoplasma mycoides subsp. mycoides SC (strain CCUG 32753 / NCTC 10114 / PG1).